The primary structure comprises 134 residues: Small ribosomal subunit protein uS9 (134 aa).

The segment at 109–134 is disordered; that stretch reads DARRTEPHKPSKSSKGPRAKRQKSYR. Positions 118–134 are enriched in basic residues; that stretch reads PSKSSKGPRAKRQKSYR.

It belongs to the universal ribosomal protein uS9 family.

The protein is Small ribosomal subunit protein uS9 of Methanococcus maripaludis (strain C5 / ATCC BAA-1333).